Here is a 214-residue protein sequence, read N- to C-terminus: rRNA methyltransferase 2, mitochondrial (214 aa).

A mitochondrion-targeting transit peptide spans 1–18 (MFSTKKSQGNLHKYIQRQ). S-adenosyl-L-methionine contacts are provided by residues 63 to 66 (PGSW), Asp-83, 100 to 101 (DI), and Asp-125. Lys-169 serves as the catalytic Proton acceptor.

It belongs to the class I-like SAM-binding methyltransferase superfamily. RNA methyltransferase RlmE family.

It localises to the mitochondrion. The catalysed reaction is a uridine in rRNA + S-adenosyl-L-methionine = a 2'-O-methyluridine in rRNA + S-adenosyl-L-homocysteine + H(+). Functionally, S-adenosyl-L-methionine-dependent 2'-O-ribose methyltransferase that catalyzes the formation of 2'-O-methyluridine at position 808 (Um808) in the mitochondrial large subunit ribosomal RNA (mtLSU rRNA), a universally conserved modification in the peptidyl transferase domain of the mtLSU rRNA. This activity may require prior 2'-O-methylguanosine modification at position 809 (Gm809) by MRM3. Essential for late-stage assembly of mtLSU required for efficient translation of mitochondrial DNA encoded proteins; methyltransferase activity is not required for this function. Essential for mitochondrial respiratory function. The polypeptide is rRNA methyltransferase 2, mitochondrial (Caenorhabditis elegans).